The primary structure comprises 413 residues: uncharacterized protein (413 aa).

A signal peptide spans 1–22; the sequence is MKKSKASALLWLFSLVGFMLHA.

The protein localises to the periplasm. Functionally, may be involved in ulvan degradation. Ulvan is the main polysaccharide component of the Ulvales (green seaweed) cell wall. It is composed of disaccharide building blocks comprising 3-sulfated rhamnose (Rha3S) linked to D-glucuronic acid (GlcA), L-iduronic acid (IduA), or D-xylose (Xyl). This is an uncharacterized protein from Formosa agariphila (strain DSM 15362 / KCTC 12365 / LMG 23005 / KMM 3901 / M-2Alg 35-1).